Reading from the N-terminus, the 473-residue chain is UDP-N-acetylmuramate--L-alanine ligase (473 aa).

115–121 (GTHGKTT) is an ATP binding site.

Belongs to the MurCDEF family.

The protein localises to the cytoplasm. It catalyses the reaction UDP-N-acetyl-alpha-D-muramate + L-alanine + ATP = UDP-N-acetyl-alpha-D-muramoyl-L-alanine + ADP + phosphate + H(+). It participates in cell wall biogenesis; peptidoglycan biosynthesis. Cell wall formation. This Rhizorhabdus wittichii (strain DSM 6014 / CCUG 31198 / JCM 15750 / NBRC 105917 / EY 4224 / RW1) (Sphingomonas wittichii) protein is UDP-N-acetylmuramate--L-alanine ligase.